A 1366-amino-acid polypeptide reads, in one-letter code: Protein HUA2-LIKE 2 (1366 aa).

The region spanning 24–81 is the PWWP domain; that stretch reads VGDLVLAKVKGFPAWPAVVSEPEKWDASPDSKKVFVHFFGTQQIAFCNPGDVEAFTEE. Over residues 111-124 the composition is skewed to basic and acidic residues; the sequence is LKQQERASDPKSAE. 5 disordered regions span residues 111–138, 203–319, 384–403, 427–451, and 787–808; these read LKQQERASDPKSAEEGTLGSAENTTLMP, TYSS…SGSK, NVQTSQNSHEKFTERPCEEN, EANSSLQAEERSPKDTVVSATAQTS, and SESANDMQNNSSGSPNIPTGEK. The segment covering 213 to 252 has biased composition (polar residues); sequence VRSQNCAPQNETCPVQRSKSPSRLQTEKLQSSMLQNSDGG. The span at 391 to 403 shows a compositional bias: basic and acidic residues; it reads SHEKFTERPCEEN. A compositionally biased stretch (polar residues) spans 787 to 803; it reads SESANDMQNNSSGSPNI. The CID domain occupies 836 to 977; sequence DVQSTRESYE…HHIRELDSHS (142 aa). Disordered regions lie at residues 1027-1076 and 1128-1366; these read LKDE…TAER and TSHQ…QRSD. Positions 1032-1052 are enriched in acidic residues; that stretch reads GGSDSEGGCDSEGGSDSDGGD. A compositionally biased stretch (basic and acidic residues) spans 1057 to 1066; that stretch reads TPEHESRILE. Over residues 1138-1152 the composition is skewed to pro residues; sequence PPLPSSSPPPPPAPP. Residues 1191–1223 are compositionally biased toward polar residues; it reads LSGSTMHYQGPESSYISGVQLTNSIPQADGSNF. The segment covering 1229–1244 has biased composition (pro residues); that stretch reads PSHPHPHPPPPPPPPQ. Composition is skewed to basic and acidic residues over residues 1251 to 1262 and 1275 to 1298; these read EPGHVLKSHRDA and CDERNFHDNHERMRHAPFENRDNW. Over residues 1299-1309 the composition is skewed to low complexity; the sequence is RYPPSSSYGSR.

In terms of tissue distribution, expressed throughout young primordia, and vegetative and reproductive apices.

It is found in the nucleus. Functionally, probable transcription factor that acts with partial redundancy with HULK1 and HULK3. Plays diverse and essential roles in the control of plant development, physiology and flowering time. The sequence is that of Protein HUA2-LIKE 2 from Arabidopsis thaliana (Mouse-ear cress).